We begin with the raw amino-acid sequence, 1101 residues long: Helicase POLQ-like (1101 aa).

Residues 212–261 are disordered; that stretch reads DLGDHSMKERDWKSSSHNTVNEELPHNCIEQPQQNDESSSKVRTSSDMNR. Basic and acidic residues predominate over residues 213-225; that stretch reads LGDHSMKERDWKS. The span at 241-258 shows a compositional bias: polar residues; the sequence is EQPQQNDESSSKVRTSSD. The 173-residue stretch at 346 to 518 folds into the Helicase ATP-binding domain; that stretch reads LNSVQERKNL…FLQAEYYTSQ (173 aa). 359 to 366 is an ATP binding site; it reads LPTSGGKT. Residues 463–466 carry the DEAH box motif; the sequence is DELH. In terms of domain architecture, Helicase C-terminal spans 566-758; the sequence is HLVALVTEVI…EFTKGIQTLF (193 aa).

The protein belongs to the helicase family. SKI2 subfamily. As to quaternary structure, homodimer. Interacts with POLN. Interacts with RAD51B and RAD51C; promoting association with the BCDX2 complex. Interacts with the replication protein A (RPA/RP-A) complex. Interacts with RAD51; stimulating HELQ DNA helicase activity and ability to unwing DNA.

The protein localises to the nucleus. Its subcellular location is the chromosome. It carries out the reaction Couples ATP hydrolysis with the unwinding of duplex DNA by translocating in the 3'-5' direction.. It catalyses the reaction ATP + H2O = ADP + phosphate + H(+). ATPase activity is strongly stimulated by single-stranded DNA. Presence of ATP and Mg cofactor are required for helicase activity allowing to unwind duplex oligonucleotides up to 60-70-mer. This helicase activity is stimulated by replication protein A (RPA/RP-A) complex that binds to unwound regions and inhibits re-annealing. In terms of biological role, single-stranded 3'-5' DNA helicase that plays a key role in homology-driven double-strand break (DSB) repair. Involved in different DSB repair mechanisms that are guided by annealing of extensive stretches of complementary bases at break ends, such as microhomology-mediated end-joining (MMEJ), single-strand annealing (SSA) or synthesis-dependent strand annealing (SDSA). Possesses both DNA unwinding and annealing activities. Forms a complex with RAD51, stimulating HELQ DNA helicase activity and ability to unwing DNA. Efficiently unwinds substrates containing 3' overhangs or a D-loop. In contrast, interaction with the replication protein A (RPA/RP-A) complex inhibits DNA unwinding by HELQ but strongly stimulates DNA strand annealing. Triggers displacement of RPA from single-stranded DNA to facilitate annealing of complementary sequences. The protein is Helicase POLQ-like of Homo sapiens (Human).